The primary structure comprises 296 residues: Ribosomal RNA small subunit methyltransferase H (296 aa).

S-adenosyl-L-methionine-binding positions include 41 to 43 (GGY), Asp-59, Phe-86, Asp-104, and Gln-111.

This sequence belongs to the methyltransferase superfamily. RsmH family.

The protein resides in the cytoplasm. It catalyses the reaction cytidine(1402) in 16S rRNA + S-adenosyl-L-methionine = N(4)-methylcytidine(1402) in 16S rRNA + S-adenosyl-L-homocysteine + H(+). Its function is as follows. Specifically methylates the N4 position of cytidine in position 1402 (C1402) of 16S rRNA. In Neorickettsia sennetsu (strain ATCC VR-367 / Miyayama) (Ehrlichia sennetsu), this protein is Ribosomal RNA small subunit methyltransferase H.